The following is a 395-amino-acid chain: ATP synthase subunit beta, chloroplastic (395 aa).

72–79 (GGAGVGKT) contacts ATP.

The protein belongs to the ATPase alpha/beta chains family. In terms of assembly, F-type ATPases have 2 components, CF(1) - the catalytic core - and CF(0) - the membrane proton channel. CF(1) has five subunits: alpha(3), beta(3), gamma(1), delta(1), epsilon(1). CF(0) has four main subunits: a(1), b(1), b'(1) and c(9-12).

Its subcellular location is the plastid. The protein resides in the chloroplast thylakoid membrane. It catalyses the reaction ATP + H2O + 4 H(+)(in) = ADP + phosphate + 5 H(+)(out). Produces ATP from ADP in the presence of a proton gradient across the membrane. The catalytic sites are hosted primarily by the beta subunits. The polypeptide is ATP synthase subunit beta, chloroplastic (Blechnum occidentale (Hammock fern)).